We begin with the raw amino-acid sequence, 508 residues long: Catalase (508 aa).

Positions 1–21 (MHMSKSFLLISMGLASISVHA) are cleaved as a signal peptide. Catalysis depends on residues histidine 72 and asparagine 145. Tyrosine 353 contacts heme. Residues 373-392 (PKSPVANHNQDGPSNNSTGL) show a composition bias toward polar residues. The tract at residues 373 to 396 (PKSPVANHNQDGPSNNSTGLGNVD) is disordered.

Belongs to the catalase family. It depends on heme as a cofactor.

It localises to the periplasm. The enzyme catalyses 2 H2O2 = O2 + 2 H2O. Functionally, decomposes hydrogen peroxide into water and oxygen; serves to protect cells from the toxic effects of hydrogen peroxide. This Vibrio vulnificus (strain CMCP6) protein is Catalase.